We begin with the raw amino-acid sequence, 429 residues long: 3-phosphoshikimate 1-carboxyvinyltransferase (429 aa).

Residues Lys-23, Ser-24, and Arg-28 each coordinate 3-phosphoshikimate. Residue Lys-23 participates in phosphoenolpyruvate binding. Phosphoenolpyruvate-binding residues include Gly-95 and Arg-123. 3-phosphoshikimate contacts are provided by Ser-168, Gln-170, Asp-316, and Lys-343. Gln-170 is a phosphoenolpyruvate binding site. The Proton acceptor role is filled by Asp-316. Phosphoenolpyruvate contacts are provided by Arg-347 and Arg-389.

The protein belongs to the EPSP synthase family. As to quaternary structure, monomer.

Its subcellular location is the cytoplasm. It carries out the reaction 3-phosphoshikimate + phosphoenolpyruvate = 5-O-(1-carboxyvinyl)-3-phosphoshikimate + phosphate. Its pathway is metabolic intermediate biosynthesis; chorismate biosynthesis; chorismate from D-erythrose 4-phosphate and phosphoenolpyruvate: step 6/7. In terms of biological role, catalyzes the transfer of the enolpyruvyl moiety of phosphoenolpyruvate (PEP) to the 5-hydroxyl of shikimate-3-phosphate (S3P) to produce enolpyruvyl shikimate-3-phosphate and inorganic phosphate. The protein is 3-phosphoshikimate 1-carboxyvinyltransferase of Bacillus cereus (strain AH187).